The sequence spans 188 residues: dCTP deaminase (188 aa).

Residues 111-116, 135-137, Gln-156, Tyr-170, and Gln-180 each bind dCTP; these read KSTYAR and TLE. Glu-137 serves as the catalytic Proton donor/acceptor.

Belongs to the dCTP deaminase family. As to quaternary structure, homotrimer.

It catalyses the reaction dCTP + H2O + H(+) = dUTP + NH4(+). The protein operates within pyrimidine metabolism; dUMP biosynthesis; dUMP from dCTP (dUTP route): step 1/2. Its function is as follows. Catalyzes the deamination of dCTP to dUTP. The protein is dCTP deaminase of Nitrosomonas europaea (strain ATCC 19718 / CIP 103999 / KCTC 2705 / NBRC 14298).